Here is a 468-residue protein sequence, read N- to C-terminus: 6-phospho-beta-galactosidase (468 aa).

Positions 19, 116, 159, 160, and 297 each coordinate D-galactose 6-phosphate. Glu-160 serves as the catalytic Proton donor. Residue Glu-375 is the Nucleophile of the active site. Positions 428, 429, 435, and 437 each coordinate D-galactose 6-phosphate.

The protein belongs to the glycosyl hydrolase 1 family.

It catalyses the reaction a 6-phospho-beta-D-galactoside + H2O = D-galactose 6-phosphate + an alcohol. Its pathway is carbohydrate metabolism; lactose degradation; D-galactose 6-phosphate and beta-D-glucose from lactose 6-phosphate: step 1/1. The sequence is that of 6-phospho-beta-galactosidase from Streptococcus pyogenes serotype M1.